The following is a 221-amino-acid chain: MAFYSEDDKSEDYLFKIVLIGDSAVGKSNLLARFARDEFYPNSKSTIGVEFQTQKMDINGKEIKAQIWDTAGQERFRAVTSAYYRGAVGALLVYDISRRQTFHSIGRWLNELHTHSDMNVVTILVGNKSDLKDLREVSTAEGKALAEAQGLFFMETSALDSSNVAAAFETVVKEIYNILSRKVMSSQELNKQDPASLSNGKKVVIPSDGQGEFKKGGCCSS.

Position 21–28 (21–28) interacts with GTP; the sequence is GDSAVGKS. An Effector region motif is present at residues 43-51; it reads SKSTIGVEF. GTP contacts are provided by residues 69–73, 127–130, and 157–158; these read DTAGQ, NKSD, and SA. S-geranylgeranyl cysteine attachment occurs at residues cysteine 218 and cysteine 219.

The protein belongs to the small GTPase superfamily. Rab family.

Its subcellular location is the cell membrane. Its function is as follows. Intracellular vesicle trafficking and protein transport. This is Ras-related protein RABA5a (RABA5A) from Arabidopsis thaliana (Mouse-ear cress).